Reading from the N-terminus, the 79-residue chain is Translation initiation factor IF-1, chloroplastic (79 aa).

Residues 1–74 (MTRKNIDLIE…HRGRITFRLR (74 aa)) enclose the S1-like domain.

Belongs to the IF-1 family. As to quaternary structure, component of the 30S ribosomal translation pre-initiation complex which assembles on the 30S ribosome in the order IF-2 and IF-3, IF-1 and N-formylmethionyl-tRNA(fMet); mRNA recruitment can occur at any time during PIC assembly.

It is found in the plastid. It localises to the chloroplast. Its function is as follows. One of the essential components for the initiation of protein synthesis. Stabilizes the binding of IF-2 and IF-3 on the 30S subunit to which N-formylmethionyl-tRNA(fMet) subsequently binds. Helps modulate mRNA selection, yielding the 30S pre-initiation complex (PIC). Upon addition of the 50S ribosomal subunit IF-1, IF-2 and IF-3 are released leaving the mature 70S translation initiation complex. The chain is Translation initiation factor IF-1, chloroplastic from Chlorella vulgaris (Green alga).